The following is a 512-amino-acid chain: Probable malate:quinone oxidoreductase (512 aa).

The protein belongs to the MQO family. Requires FAD as cofactor.

The enzyme catalyses (S)-malate + a quinone = a quinol + oxaloacetate. The protein operates within carbohydrate metabolism; tricarboxylic acid cycle; oxaloacetate from (S)-malate (quinone route): step 1/1. This chain is Probable malate:quinone oxidoreductase, found in Bradyrhizobium diazoefficiens (strain JCM 10833 / BCRC 13528 / IAM 13628 / NBRC 14792 / USDA 110).